Here is a 194-residue protein sequence, read N- to C-terminus: Threonylcarbamoyl-AMP synthase (194 aa).

The YrdC-like domain maps to 12-194 (SPNMKDLLIQ…DVMTGKLIRE (183 aa)).

This sequence belongs to the SUA5 family. TsaC subfamily.

The protein resides in the cytoplasm. The enzyme catalyses L-threonine + hydrogencarbonate + ATP = L-threonylcarbamoyladenylate + diphosphate + H2O. Functionally, required for the formation of a threonylcarbamoyl group on adenosine at position 37 (t(6)A37) in tRNAs that read codons beginning with adenine. Catalyzes the conversion of L-threonine, HCO(3)(-)/CO(2) and ATP to give threonylcarbamoyl-AMP (TC-AMP) as the acyladenylate intermediate, with the release of diphosphate. This chain is Threonylcarbamoyl-AMP synthase, found in Blochmanniella pennsylvanica (strain BPEN).